The following is a 160-amino-acid chain: Myosin regulatory light chain, smooth muscle (160 aa).

Ser-1 bears the Blocked amino end (Ser) mark. Ser-11 is subject to Phosphoserine. EF-hand domains are found at residues 20–55 (NQIQ…LGTA) and 88–123 (DPEE…MGDN). Ca(2+)-binding residues include Asp-33, Asn-35, Asp-37, and Asp-44.

Functionally, in molluscan muscle, calcium regulation is associated with myosin rather than with actin. Muscle myosin contains two types of light chains: the catalytic light chain, essential for ATPase activity, and the regulatory light chain, a calcium-binding protein responsible for Ca(2+) dependent binding and Ca(2+) dependent Mg-ATPase activity. The protein is Myosin regulatory light chain, smooth muscle of Spisula sachalinensis (Sakhalin surf-clam).